The primary structure comprises 491 residues: Glycogen synthase (491 aa).

Residue lysine 15 participates in ADP-alpha-D-glucose binding.

It belongs to the glycosyltransferase 1 family. Bacterial/plant glycogen synthase subfamily.

The catalysed reaction is [(1-&gt;4)-alpha-D-glucosyl](n) + ADP-alpha-D-glucose = [(1-&gt;4)-alpha-D-glucosyl](n+1) + ADP + H(+). It functions in the pathway glycan biosynthesis; glycogen biosynthesis. Its function is as follows. Synthesizes alpha-1,4-glucan chains using ADP-glucose. The chain is Glycogen synthase from Treponema denticola (strain ATCC 35405 / DSM 14222 / CIP 103919 / JCM 8153 / KCTC 15104).